The following is a 330-amino-acid chain: tRNA-modifying protein YgfZ (330 aa).

Folate contacts are provided by W28 and W190.

The protein belongs to the tRNA-modifying YgfZ family.

Its subcellular location is the cytoplasm. Functionally, folate-binding protein involved in regulating the level of ATP-DnaA and in the modification of some tRNAs. It is probably a key factor in regulatory networks that act via tRNA modification, such as initiation of chromosomal replication. The chain is tRNA-modifying protein YgfZ from Yersinia pseudotuberculosis serotype IB (strain PB1/+).